We begin with the raw amino-acid sequence, 175 residues long: DDB1- and CUL4-associated factor 16 (175 aa).

A disordered region spans residues 1 to 42; sequence MGPRNPSPDPLSESESEEEENTNYLNESSGEEWDSSEEEDPV. Acidic residues-rich tracts occupy residues 12 to 21 and 29 to 41; these read SESESEEEEN and SGEE…EEDP. K61 carries the N6-acetyllysine modification.

Interacts with DDB1 and CUL4A.

Its subcellular location is the nucleus. It participates in protein modification; protein ubiquitination. Functions as a substrate recognition component for CUL4-DDB1 E3 ubiquitin-protein ligase complex, which mediates ubiquitination and proteasome-dependent degradation of nuclear proteins. This chain is DDB1- and CUL4-associated factor 16 (DCAF16), found in Bos taurus (Bovine).